A 144-amino-acid chain; its full sequence is Deoxyuridine 5'-triphosphate nucleotidohydrolase (144 aa).

Residues 63–65 (RSG), Asn76, and 80–82 (TVD) each bind substrate.

It belongs to the dUTPase family. Mg(2+) serves as cofactor.

The catalysed reaction is dUTP + H2O = dUMP + diphosphate + H(+). The protein operates within pyrimidine metabolism; dUMP biosynthesis; dUMP from dCTP (dUTP route): step 2/2. In terms of biological role, this enzyme is involved in nucleotide metabolism: it produces dUMP, the immediate precursor of thymidine nucleotides and it decreases the intracellular concentration of dUTP so that uracil cannot be incorporated into DNA. This is Deoxyuridine 5'-triphosphate nucleotidohydrolase from Flavobacterium johnsoniae (strain ATCC 17061 / DSM 2064 / JCM 8514 / BCRC 14874 / CCUG 350202 / NBRC 14942 / NCIMB 11054 / UW101) (Cytophaga johnsonae).